Reading from the N-terminus, the 118-residue chain is LYR motif containing protein 1 (118 aa).

The segment at 91 to 118 is disordered; sequence TQKGRKLRAQQRLRKQAKPVYLQSQDET. Residues 93-107 are compositionally biased toward basic residues; the sequence is KGRKLRAQQRLRKQA.

Belongs to the complex I LYR family.

The chain is LYR motif containing protein 1 (lyrm1) from Danio rerio (Zebrafish).